Consider the following 589-residue polypeptide: Acyl-CoA ligase SID4 (589 aa).

The PTS2-type peroxisomal targeting signal signature appears at 12-20 (RLQQTLNHI). ATP contacts are provided by residues 228 to 236 (TSGSTGNPK), 367 to 372 (SSYGLT), D458, and R473. T372 provides a ligand contact to substrate. CoA-binding positions include 481 to 483 (GGE), K547, and 555 to 557 (FGL). K572 serves as a coordination point for ATP.

It belongs to the ATP-dependent AMP-binding enzyme family.

The protein localises to the peroxisome. Its pathway is siderophore biosynthesis. Its function is as follows. Acyl-CoA ligase; part of the gene cluster that mediates the biosynthesis of hydroxamate-containing siderophores that play a critical role in virulence via intracellular iron acquisition during macrophage infection. This Ajellomyces capsulatus (Darling's disease fungus) protein is Acyl-CoA ligase SID4.